The following is a 233-amino-acid chain: 7-cyano-7-deazaguanine synthase (233 aa).

7–17 (CSGGLDSVSLA) lines the ATP pocket. Cys185, Cys193, Cys196, and Cys199 together coordinate Zn(2+).

The protein belongs to the QueC family. Requires Zn(2+) as cofactor.

It carries out the reaction 7-carboxy-7-deazaguanine + NH4(+) + ATP = 7-cyano-7-deazaguanine + ADP + phosphate + H2O + H(+). Its pathway is purine metabolism; 7-cyano-7-deazaguanine biosynthesis. Its function is as follows. Catalyzes the ATP-dependent conversion of 7-carboxy-7-deazaguanine (CDG) to 7-cyano-7-deazaguanine (preQ(0)). The chain is 7-cyano-7-deazaguanine synthase from Paracoccus denitrificans (strain Pd 1222).